A 176-amino-acid polypeptide reads, in one-letter code: Photosystem I assembly protein Ycf4 (176 aa).

A run of 2 helical transmembrane segments spans residues phenylalanine 22 to serine 42 and leucine 48 to isoleucine 68.

It belongs to the Ycf4 family.

It is found in the plastid thylakoid membrane. Seems to be required for the assembly of the photosystem I complex. The polypeptide is Photosystem I assembly protein Ycf4 (Cuscuta gronovii (Common dodder)).